Consider the following 604-residue polypeptide: Glutamine--fructose-6-phosphate aminotransferase [isomerizing] (604 aa).

Cys2 (nucleophile; for GATase activity) is an active-site residue. The Glutamine amidotransferase type-2 domain maps to 2-219; sequence CGIMGAVSER…EGDSACVTTQ (218 aa). SIS domains lie at 279–427 and 454–594; these read LRAS…DNRA and LASL…VDQP. Lys599 acts as the For Fru-6P isomerization activity in catalysis.

As to quaternary structure, homodimer.

Its subcellular location is the cytoplasm. It carries out the reaction D-fructose 6-phosphate + L-glutamine = D-glucosamine 6-phosphate + L-glutamate. Catalyzes the first step in hexosamine metabolism, converting fructose-6P into glucosamine-6P using glutamine as a nitrogen source. The chain is Glutamine--fructose-6-phosphate aminotransferase [isomerizing] from Legionella pneumophila (strain Paris).